Consider the following 198-residue polypeptide: Recombination protein RecR (198 aa).

The C4-type zinc-finger motif lies at 56–71 (CTTCGNIDTHDPCAIC). In terms of domain architecture, Toprim spans 79 to 174 (RSLCVVEEVS…RLTQLAHGLP (96 aa)).

This sequence belongs to the RecR family.

Functionally, may play a role in DNA repair. It seems to be involved in an RecBC-independent recombinational process of DNA repair. It may act with RecF and RecO. The protein is Recombination protein RecR of Sphingopyxis alaskensis (strain DSM 13593 / LMG 18877 / RB2256) (Sphingomonas alaskensis).